A 138-amino-acid chain; its full sequence is Large ribosomal subunit protein uL16 (138 aa).

Residues 1 to 17 (MLIPRKVKHRKQHHPRQ) show a composition bias toward basic residues. The segment at 1–22 (MLIPRKVKHRKQHHPRQRGIAS) is disordered.

The protein belongs to the universal ribosomal protein uL16 family. In terms of assembly, part of the 50S ribosomal subunit.

Binds 23S rRNA and is also seen to make contacts with the A and possibly P site tRNAs. This is Large ribosomal subunit protein uL16 from Mycobacterium leprae (strain Br4923).